A 145-amino-acid polypeptide reads, in one-letter code: UI (145 aa).

A signal peptide spans 1-22; the sequence is MKPVPLVLLITSVLLTTHIPLS. Val143 bears the Valine amide mark.

Belongs to the sauvagine/corticotropin-releasing factor/urotensin I family.

The protein resides in the secreted. Its function is as follows. Urotensin is found in the teleost caudal neurosecretory system. It has a suggested role in osmoregulation and as a corticotropin-releasing factor. The non-hormonal portion of this precursor may be a urotensin binding protein, urophysin. In Carassius auratus (Goldfish), this protein is UI.